The sequence spans 1239 residues: WD repeat-containing protein 11 (1239 aa).

WD repeat units follow at residues 63–112 (RHKA…AHCE), 115–158 (EHSK…KLWK), 358–398 (TKTV…SKSS), 476–515 (RMCPPLTTKNINHYQPLLAVGTSNGSVLVYNLTSGLLHKE), 571–610 (NDEPAIEMIKVSHLKQYLVVVFRDKPLELWDVRTGTLLRE), 713–750 (GSMGSIACIAWKGDTLVLGDVDGNLNFWDLKARLSRGV), 752–792 (THRG…MVSS), 798–836 (NVNYRILDIDWCTSDKVVLASDDGCVRVLEMAMKSASYR), and 898–944 (SLSN…IQAF). The disordered stretch occupies residues 1213–1239 (EDLSQTEGTGTESSPADDTDNSLVNIE). A compositionally biased stretch (polar residues) spans 1215–1226 (LSQTEGTGTESS).

As to quaternary structure, component of the complex WDR11.

The protein localises to the cytoplasm. The protein resides in the cytoskeleton. Its subcellular location is the cilium basal body. It localises to the nucleus. It is found in the cilium axoneme. The protein localises to the cytoplasmic vesicle. The protein resides in the golgi apparatus. Its subcellular location is the trans-Golgi network. Functionally, involved in the Hedgehog (Hh) signaling pathway, is essential for normal ciliogenesis. Regulates the proteolytic processing of gli3 and cooperates with the transcription factor emx1 in the induction of downstream Hh pathway gene expression and gonadotropin-releasing hormone production. WDR11 complex facilitates the tethering of Adaptor protein-1 complex (AP-1)-derived vesicles. The polypeptide is WD repeat-containing protein 11 (wdr11) (Danio rerio (Zebrafish)).